Reading from the N-terminus, the 271-residue chain is Formamidopyrimidine-DNA glycosylase (271 aa).

The active-site Schiff-base intermediate with DNA is Pro-2. Glu-3 (proton donor) is an active-site residue. The active-site Proton donor; for beta-elimination activity is the Lys-58. Residues His-91, Arg-110, and Arg-152 each coordinate DNA. Residues 237–271 (WVYGRAGQSCRQCGELVSKTRQGQRSTFFCARCQH) form an FPG-type zinc finger. The Proton donor; for delta-elimination activity role is filled by Arg-261.

It belongs to the FPG family. As to quaternary structure, monomer. The cofactor is Zn(2+).

The enzyme catalyses Hydrolysis of DNA containing ring-opened 7-methylguanine residues, releasing 2,6-diamino-4-hydroxy-5-(N-methyl)formamidopyrimidine.. The catalysed reaction is 2'-deoxyribonucleotide-(2'-deoxyribose 5'-phosphate)-2'-deoxyribonucleotide-DNA = a 3'-end 2'-deoxyribonucleotide-(2,3-dehydro-2,3-deoxyribose 5'-phosphate)-DNA + a 5'-end 5'-phospho-2'-deoxyribonucleoside-DNA + H(+). Its function is as follows. Involved in base excision repair of DNA damaged by oxidation or by mutagenic agents. Acts as a DNA glycosylase that recognizes and removes damaged bases. Has a preference for oxidized purines, such as 7,8-dihydro-8-oxoguanine (8-oxoG). Has AP (apurinic/apyrimidinic) lyase activity and introduces nicks in the DNA strand. Cleaves the DNA backbone by beta-delta elimination to generate a single-strand break at the site of the removed base with both 3'- and 5'-phosphates. The polypeptide is Formamidopyrimidine-DNA glycosylase (Nitrosomonas europaea (strain ATCC 19718 / CIP 103999 / KCTC 2705 / NBRC 14298)).